A 1077-amino-acid chain; its full sequence is Receptor-type guanylate cyclase daf-11 (1077 aa).

4 N-linked (GlcNAc...) asparagine glycosylation sites follow: Asn14, Asn112, Asn149, and Asn311. The helical transmembrane segment at 335-355 (TGVIIAIAVIMGVLLMFIIIL) threads the bilayer. A Protein kinase domain is found at 355-695 (LTTIRKCCNG…LARKIIDTVL (341 aa)). Over 356 to 1077 (TTIRKCCNGS…DSQASTIPDN (722 aa)) the chain is Cytoplasmic. One can recognise a Guanylate cyclase domain in the interval 765 to 895 (TILYSDIVGF…EAVILASKME (131 aa)). Mg(2+) contacts are provided by Asp770, Ile771, and Asp814. Residues 983–1034 (KDKMTLAKEKVIAERKNEEERLQRQQTLQEALEEHEEEIEMNEVLVDEDEGE) adopt a coiled-coil conformation. Residues 1048 to 1077 (TQMEELEDEPAGRTIGHGRLDSQASTIPDN) are disordered.

The protein belongs to the adenylyl cyclase class-4/guanylyl cyclase family. As to expression, expressed in sensory neurons including ASI, ASJ, ASK, AWB and AWC. Expressed in ASJ neurons in the dauer stage.

It localises to the cell membrane. The protein localises to the cell projection. The protein resides in the dendrite. Its subcellular location is the cilium. It is found in the perikaryon. It catalyses the reaction GTP = 3',5'-cyclic GMP + diphosphate. Functionally, guanylate cyclase involved in the production of the second messenger cGMP. In addition, regulates cGMP levels by controlling the transcription of 3',5'-cyclic phosphodiesterase pde-1 and pde-5 mRNAs. Involved in the olfactory, light and pheromone sensing pathways. Part of the chemosensory mechanism of the ASJ sensory neuron that controls dauer formation and dauer recovery. Promotes the calcium flux in ASJ sensory neurons in response to onset and removal of a nitric oxide (NO) stimulus and is thereby required for the behavioral avoidance response to NO-producing organisms like P.aeruginosa. In ASI and ASJ sensory neurons, controls dauer formation and behavioral response to P.aeruginosa by up-regulating the transcription of daf-7, a member of the TGF-beta family. Required for the chemotaxis responses to non-volatile and volatile attractants mediated by the sensory neurons ASE and AWC respectively. Required in ASJ neurons for phototransduction downstream of G protein coupled-photoreceptor lite-1. Plays a role in the development of ASJ sensory neuron axons during late larval stages and in the maintenance of normal axon morphology in adults. Required to maintain the expression of putative olfactory receptor str-2 in one of the two AWC neurons in adults. Regulates, via the production of cGMP, lifespan (in some environmental conditions), sensitivity to oxidative stress and entry into quiescence triggered by satiety. In AWB and AWC sensory neurons, mediates the recognition of food odors which subsequently allows for the detection of preferred food sources. This Caenorhabditis elegans protein is Receptor-type guanylate cyclase daf-11.